The following is a 712-amino-acid chain: Potassium transporter 1 (712 aa).

The Cytoplasmic portion of the chain corresponds to 1 to 19 (MNQSPSLIEQGISQQHLKT). The chain crosses the membrane as a helical span at residues 20 to 40 (LSCANVLTLAYQSLGVIYGDL). The Extracellular portion of the chain corresponds to 41-67 (STSPLYVYKTTFSGKLSLHEDDEEIFG). The chain crosses the membrane as a helical span at residues 68-88 (VFSFIFWTFTLIALFKYVFIV). The Cytoplasmic segment spans residues 89–154 (LSADDNGEGG…FFEKHPKSQK (66 aa)). Residues 155–175 (CLLLFVLLGTCMAIGDSVLTP) form a helical membrane-spanning segment. The Extracellular segment spans residues 176-189 (TISVLSAVSGVKLK). A helical membrane pass occupies residues 190–210 (IPNLHENYVVIIACIILVAIF). Residues 211–219 (SVQRYGTHR) lie on the Cytoplasmic side of the membrane. A helical transmembrane segment spans residues 220–240 (VAFIFAPISTAWLLSISSIGV). The Extracellular segment spans residues 241–267 (YNTIKWNPRIVSALSPVYMYKFLRSTG). The helical transmembrane segment at 268–288 (VEGWVSLGGVVLSITGVETMF) threads the bilayer. The Cytoplasmic segment spans residues 289-300 (ADLGHFSSLSIK). Residues 301 to 321 (VAFSFFVYPCLILAYMGEAAF) form a helical membrane-spanning segment. The Extracellular segment spans residues 322-340 (LSKHHEDIQQSFYKAIPEP). The helical transmembrane segment at 341–361 (VFWPVFIVATFAAVVGSQAVI) threads the bilayer. The Cytoplasmic segment spans residues 362-392 (SATFSIISQCCALDCFPRVKIIHTSSKIHGQ). A helical membrane pass occupies residues 393–413 (IYIPEVNWMLMCLCLAVTIGL). Residues 414 to 424 (RDTNMMGHAYG) are Extracellular-facing. The helical transmembrane segment at 425–445 (LAVTSVMLVTTCLMTLVMTIV) threads the bilayer. Residues 446–449 (WKQR) lie on the Cytoplasmic side of the membrane. The chain crosses the membrane as a helical span at residues 450-470 (IITVLAFVVFFGSIELLYFSS). Residues 471 to 474 (CVYK) are Extracellular-facing. Residues 475–495 (VPEGGWIPILLSLTFMAVMYI) form a helical membrane-spanning segment. Over 496-712 (WNYGTTKKHE…LLEVGMVYYV (217 aa)) the chain is Cytoplasmic.

Belongs to the HAK/KUP transporter (TC 2.A.72.3) family. Detected in the whole mature plant but preferentially expressed in roots and stems, and in potassium-starved plants.

It is found in the cell membrane. In terms of biological role, high-affinity potassium transporter that could play a major role in the uptake of potassium from the rhizosphere. May act as a low-affinity potassium transporter under high potassium concentrations. Could also transport rubidium. This Arabidopsis thaliana (Mouse-ear cress) protein is Potassium transporter 1 (POT1).